The sequence spans 260 residues: Triosephosphate isomerase (260 aa).

Residue 11–13 (NWK) coordinates substrate. The Electrophile role is filled by histidine 103. Glutamate 175 functions as the Proton acceptor in the catalytic mechanism. Substrate-binding positions include glycine 181, serine 220, and 241 to 242 (GG).

It belongs to the triosephosphate isomerase family. As to quaternary structure, homodimer.

It localises to the cytoplasm. It catalyses the reaction D-glyceraldehyde 3-phosphate = dihydroxyacetone phosphate. Its pathway is carbohydrate biosynthesis; gluconeogenesis. The protein operates within carbohydrate degradation; glycolysis; D-glyceraldehyde 3-phosphate from glycerone phosphate: step 1/1. Its function is as follows. Involved in the gluconeogenesis. Catalyzes stereospecifically the conversion of dihydroxyacetone phosphate (DHAP) to D-glyceraldehyde-3-phosphate (G3P). The polypeptide is Triosephosphate isomerase (Shewanella amazonensis (strain ATCC BAA-1098 / SB2B)).